The primary structure comprises 440 residues: Glutamate--tRNA ligase 1 (440 aa).

A 'HIGH' region motif is present at residues 7–17 (PSPTGYLHVGN). The 'KMSKS' region motif lies at 238-242 (KISKR). Lys241 contributes to the ATP binding site.

It belongs to the class-I aminoacyl-tRNA synthetase family. Glutamate--tRNA ligase type 1 subfamily. In terms of assembly, monomer.

It localises to the cytoplasm. The enzyme catalyses tRNA(Glu) + L-glutamate + ATP = L-glutamyl-tRNA(Glu) + AMP + diphosphate. Its function is as follows. Catalyzes the attachment of glutamate to tRNA(Glu) in a two-step reaction: glutamate is first activated by ATP to form Glu-AMP and then transferred to the acceptor end of tRNA(Glu). This Wolbachia sp. subsp. Brugia malayi (strain TRS) protein is Glutamate--tRNA ligase 1.